Reading from the N-terminus, the 238-residue chain is tRNA (guanine-N(7)-)-methyltransferase (238 aa).

The S-adenosyl-L-methionine site is built by Glu70, Asp95, Asp122, and Asp145. Asp145 is an active-site residue. Substrate is bound by residues Lys149, Asp181, and 216–219; that span reads TKFE.

The protein belongs to the class I-like SAM-binding methyltransferase superfamily. TrmB family.

The catalysed reaction is guanosine(46) in tRNA + S-adenosyl-L-methionine = N(7)-methylguanosine(46) in tRNA + S-adenosyl-L-homocysteine. Its pathway is tRNA modification; N(7)-methylguanine-tRNA biosynthesis. Functionally, catalyzes the formation of N(7)-methylguanine at position 46 (m7G46) in tRNA. This Neisseria meningitidis serogroup A / serotype 4A (strain DSM 15465 / Z2491) protein is tRNA (guanine-N(7)-)-methyltransferase.